The primary structure comprises 188 residues: uncharacterized protein (188 aa).

The protein resides in the plastid. It is found in the cyanelle. This is an uncharacterized protein from Cyanophora paradoxa.